Reading from the N-terminus, the 308-residue chain is RING-H2 finger protein ATL63 (308 aa).

The chain crosses the membrane as a helical span at residues 29–49 (VLLAALVFLLLVVLFVLLLHF). An RING-type; atypical zinc finger spans residues 138-180 (CVICLGLWEAGDFGRKLRNCGHGFHVECIDMWLSSHSTCPLCR). The segment at 252–308 (VFDDDEEINDGGTRSDRRRSMSMTSSASSSLMRMLSSSSSRSERNKVFPTARQDSSK) is disordered. A compositionally biased stretch (low complexity) spans 272-291 (MSMTSSASSSLMRMLSSSSS).

This sequence belongs to the RING-type zinc finger family. ATL subfamily.

It is found in the membrane. The catalysed reaction is S-ubiquitinyl-[E2 ubiquitin-conjugating enzyme]-L-cysteine + [acceptor protein]-L-lysine = [E2 ubiquitin-conjugating enzyme]-L-cysteine + N(6)-ubiquitinyl-[acceptor protein]-L-lysine.. The protein operates within protein modification; protein ubiquitination. The sequence is that of RING-H2 finger protein ATL63 (ATL63) from Arabidopsis thaliana (Mouse-ear cress).